The primary structure comprises 289 residues: MIRIAIPNKGRLHEPTMSLFKDAGLPISGGAESRILFAKTTDPDIHILFARAADIPEYVQDGAADVGVTGMDLITERGADVEALLDLKYGKASLVLAVPEESVFQSARDLEGKKVATEFPEITRQYFKNLGITVEVITVSGACEMTPHVGIADAIVDISSSGTTLLINHLKAIDTVFSSTVHLIANKKSLKEKGKILDIKTALESVLNAKKKRYLMMNVPEASLQAVKEVLPGMSGPTVMKVESSRSSEESFLAVHSVVDADLIFTIVNKLKNVGARDILVVPIERIMP.

It belongs to the ATP phosphoribosyltransferase family. Long subfamily. Mg(2+) is required as a cofactor.

The protein resides in the cytoplasm. The enzyme catalyses 1-(5-phospho-beta-D-ribosyl)-ATP + diphosphate = 5-phospho-alpha-D-ribose 1-diphosphate + ATP. Its pathway is amino-acid biosynthesis; L-histidine biosynthesis; L-histidine from 5-phospho-alpha-D-ribose 1-diphosphate: step 1/9. Feedback inhibited by histidine. Functionally, catalyzes the condensation of ATP and 5-phosphoribose 1-diphosphate to form N'-(5'-phosphoribosyl)-ATP (PR-ATP). Has a crucial role in the pathway because the rate of histidine biosynthesis seems to be controlled primarily by regulation of HisG enzymatic activity. The polypeptide is ATP phosphoribosyltransferase (Methanosarcina acetivorans (strain ATCC 35395 / DSM 2834 / JCM 12185 / C2A)).